The sequence spans 423 residues: MDPDEVNQALGHYLNDSESGELVVEDSTTVQVTNPEARKTGDKIEVYYSRKTTVVSPTNSDDEEGEFCSDSELLPAQGGHRSRATSFAGRVRAGSDDEMNPKHTVLRYRRKKGGQWREVNAQGTPDKRKDDEDELEVDVKEDRSEQTGIVTKTYEARWKVLKYEHLPEWLQDNEFLRHGHRPPLPSFAECFKSIWSLHTETGNIWTHLIGCVAFFLLACWFLTRPDNHIQFQEKVVFSFFFAGAVSVSDSRSPSTPSRVIRSTSSRYSANSTIWESRCSLSARLFQPKITYIAMVCVLGIGAIVVSLWDKFSESKYRPVRAAVFVGMGCSGVIPTIHYIITDGVHSLFADNSFHWLLLMAFLYLLGAALYATRTPERFFPGKCDIWFQSHQLFHTCVVIAAFVHYYGISEMAFARLNEQCPVR.

The Cytoplasmic segment spans residues 1 to 201 (MDPDEVNQAL…KSIWSLHTET (201 aa)). The interval 54–140 (VVSPTNSDDE…DEDELEVDVK (87 aa)) is disordered. The segment covering 60-69 (SDDEEGEFCS) has biased composition (acidic residues). Residues 104–114 (TVLRYRRKKGG) show a composition bias toward basic residues. The chain crosses the membrane as a helical span at residues 202-222 (GNIWTHLIGCVAFFLLACWFL). Over 223 to 234 (TRPDNHIQFQEK) the chain is Extracellular. Residues 235 to 252 (VVFSFFFAGAVSVSDSRS) traverse the membrane as a helical segment. The Cytoplasmic portion of the chain corresponds to 253-288 (PSTPSRVIRSTSSRYSANSTIWESRCSLSARLFQPK). The chain crosses the membrane as a helical span at residues 289–309 (ITYIAMVCVLGIGAIVVSLWD). The Extracellular segment spans residues 310–320 (KFSESKYRPVR). Residues 321 to 341 (AAVFVGMGCSGVIPTIHYIIT) form a helical membrane-spanning segment. Residues 342-351 (DGVHSLFADN) lie on the Cytoplasmic side of the membrane. The helical transmembrane segment at 352 to 372 (SFHWLLLMAFLYLLGAALYAT) threads the bilayer. The Extracellular segment spans residues 373–392 (RTPERFFPGKCDIWFQSHQL). A helical transmembrane segment spans residues 393–413 (FHTCVVIAAFVHYYGISEMAF). At 414–423 (ARLNEQCPVR) the chain is on the cytoplasmic side.

Belongs to the ADIPOR family.

It is found in the membrane. Functionally, probable receptor, which may be involved in metabolic pathways that regulate lipid metabolism such as fatty acid oxidation. The sequence is that of Progestin and adipoQ receptor-like protein 1 from Caenorhabditis briggsae.